We begin with the raw amino-acid sequence, 463 residues long: MHLHFTPRQIVEKLDQYIIGQKDAKKAVAVALRNRYRRSKLAENLRDEIAPKNILMIGPTGVGKTEVARRMAKLVGAPFIKVEATKFTEVGYVGRDVESMVRDLVETSVRIVKEEMVVKVQDKAEEQANQRLVEILVPSPEKQSGFKNPLEMLFGGAQNSNQTTDSQEDVEIEKKRQDVERKLAAGLLEDEIVSIEVTEQQSSMFDMLQGTGMEQMGMNFQDALGSFMPKKTKKRKLSVKEARKVLTNEEAQRLIDMDEVTQEAVYRAEQLGIIFIDEIDKIAGKQSNSVDVSREGVQRDILPIVEGSNVATKYGSVKTDYILFVAAGAFHMSKPSDLIPELQGRFPIRVELTKLSTDDFVKILIEPDNALIKQYIALLATEGIEIEFSDEAIRKIAEIAYQVNQDTDNIGARRLHTIMEKLLEDLSFEASEITLEKITITPQYVEEKLATIAKNKDVSQFIL.

ATP-binding positions include Ile-19, Gly-61–Glu-66, Asp-277, Glu-341, and Arg-413.

This sequence belongs to the ClpX chaperone family. HslU subfamily. In terms of assembly, a double ring-shaped homohexamer of HslV is capped on each side by a ring-shaped HslU homohexamer. The assembly of the HslU/HslV complex is dependent on binding of ATP.

The protein localises to the cytoplasm. ATPase subunit of a proteasome-like degradation complex; this subunit has chaperone activity. The binding of ATP and its subsequent hydrolysis by HslU are essential for unfolding of protein substrates subsequently hydrolyzed by HslV. HslU recognizes the N-terminal part of its protein substrates and unfolds these before they are guided to HslV for hydrolysis. The chain is ATP-dependent protease ATPase subunit HslU from Bacillus cereus (strain AH187).